The primary structure comprises 288 residues: CBY1-interacting BAR domain-containing protein 2 (288 aa).

The interval 6-217 (SRDSQVRVME…ESYDLEKDLE (212 aa)) is BAR-like. Disordered stretches follow at residues 133-157 (QKSPSDRQTISQAETSVQRASVDAS) and 256-288 (TIRSQRKEAVSEDDSAEEDPVEDLRGQAQRLNQ). Residues 138–157 (DRQTISQAETSVQRASVDAS) show a composition bias toward polar residues. The span at 266-276 (SEDDSAEEDPV) shows a compositional bias: acidic residues.

Belongs to the CIBAR family. In terms of assembly, homodimer (via BAR-like domain). Heterodimer (via BAR-like domain) with FAM92A. Interacts with CBY1.

The protein resides in the cytoplasm. It localises to the cytoskeleton. It is found in the microtubule organizing center. Its subcellular location is the centrosome. The protein localises to the centriole. The protein resides in the cilium basal body. May play a role in ciliogenesis. In cooperation with CBY1 may facilitate ciliogenesis likely by the recruitment and fusion of endosomal vesicles at distal appendages during early stages of ciliogenesis. The chain is CBY1-interacting BAR domain-containing protein 2 (CIBAR2) from Bos taurus (Bovine).